Consider the following 990-residue polypeptide: Putative ariadne-like RING finger protein R811 (990 aa).

A VWFA domain is found at 8 to 201; the sequence is DLAIVVDATG…IITQTTIKLL (194 aa). The tract at residues 797–990 is TRIAD supradomain; sequence EKGLCMICFN…GGAFEYDQDD (194 aa). Cys-801, Cys-804, Cys-827, and Cys-830 together coordinate Zn(2+). The RING-type 1 zinc finger occupies 801–854; sequence CMICFNEFSKSNLRQICGRKVCQSVACYDCMKSWYGENKVGDLIHVNALTCPFC. The IBR-type zinc finger occupies 855-903; the sequence is KQCPMFNILAAFNRQVCAMVRTNNSFDIDWWYGWCLKCFQPKKVVEKEC. Residues Cys-930 and Cys-935 each coordinate Zn(2+). An RING-type 2; atypical zinc finger spans residues 930 to 961; that stretch reads CPNSLCKIPIIKDGGCNHMECTACKKHFCWLC. Residue Cys-945 is part of the active site. The Zn(2+) site is built by Cys-950 and Cys-953.

This is Putative ariadne-like RING finger protein R811 from Acanthamoeba polyphaga (Amoeba).